The chain runs to 199 residues: MTAAVWTLLLAYLFGSVPAGVLVARTYGVDLRKVGSGNIGATNVLRALGWGPALVVAFFDVFKGGIAVLVARAFGLSDWMLGGVALMAVLGHNYSVFLRFRGGKGVATSFGTLLFLDPVLALWTFPIGLSVILLTRYVSAGSMTGGVAAFVLSLALGRPLWEVATVFLMALLIFWTHRENLKRLREGTERRLGERVEAR.

The next 5 helical transmembrane spans lie at 3–23, 50–70, 78–98, 113–133, and 154–174; these read AAVW…GVLV, WGPA…AVLV, DWML…SVFL, LLFL…SVIL, and LALG…LLIF.

Belongs to the PlsY family. In terms of assembly, probably interacts with PlsX.

Its subcellular location is the cell inner membrane. The catalysed reaction is an acyl phosphate + sn-glycerol 3-phosphate = a 1-acyl-sn-glycero-3-phosphate + phosphate. The protein operates within lipid metabolism; phospholipid metabolism. Its function is as follows. Catalyzes the transfer of an acyl group from acyl-phosphate (acyl-PO(4)) to glycerol-3-phosphate (G3P) to form lysophosphatidic acid (LPA). This enzyme utilizes acyl-phosphate as fatty acyl donor, but not acyl-CoA or acyl-ACP. The polypeptide is Glycerol-3-phosphate acyltransferase (Thermus thermophilus (strain ATCC 27634 / DSM 579 / HB8)).